We begin with the raw amino-acid sequence, 589 residues long: Kelch-like protein 25 (589 aa).

Residues 46–114 (TDVTLWAGDR…AYSSRIVINE (69 aa)) enclose the BTB domain. Residues 149–250 (CLGMMVLSDA…LPSDCLKKAV (102 aa)) enclose the BACK domain. Kelch repeat units follow at residues 296-340 (TLLI…AIGC), 341-388 (KVYV…ELEN), 389-444 (CLYV…SAKL), 446-492 (LFVF…VLGS), 493-538 (QIFI…ASGN), and 539-585 (KLYV…STWK).

As to quaternary structure, component of the BCR(KLHL25) E3 ubiquitin ligase complex, at least composed of CUL3, KLHL25 and RBX1.

It participates in protein modification; protein ubiquitination. Substrate-specific adapter of a BCR (BTB-CUL3-RBX1) E3 ubiquitin ligase complex involved in various processes, such as translation homeostasis and lipid synthesis. The BCR(KLHL25) ubiquitin ligase complex acts by mediating ubiquitination of hypophosphorylated EIF4EBP1 (4E-BP1): ubiquitination and subsequent degradation of hypophosphorylated EIF4EBP1 (4E-BP1) probably serves as a homeostatic mechanism to maintain translation and prevent eIF4E inhibition when eIF4E levels are low. The BCR(KLHL25) complex does not target EIF4EBP1 (4E-BP1) when it is hyperphosphorylated or associated with eIF4E. The BCR(KLHL25) complex also acts as a regulator of lipid synthesis by mediating ubiquitination and degradation of ACLY, thereby inhibiting lipid synthesis. BCR(KLHL25)-mediated degradation of ACLY promotes fatty acid oxidation and is required for differentiation of inducible regulatory T (iTreg) cells. In Rattus norvegicus (Rat), this protein is Kelch-like protein 25.